We begin with the raw amino-acid sequence, 202 residues long: Peptidyl-tRNA hydrolase (202 aa).

Tyrosine 14 provides a ligand contact to tRNA. Catalysis depends on histidine 19, which acts as the Proton acceptor. TRNA contacts are provided by phenylalanine 64, asparagine 66, and asparagine 112.

The protein belongs to the PTH family. As to quaternary structure, monomer.

The protein localises to the cytoplasm. The enzyme catalyses an N-acyl-L-alpha-aminoacyl-tRNA + H2O = an N-acyl-L-amino acid + a tRNA + H(+). Its function is as follows. Hydrolyzes ribosome-free peptidyl-tRNAs (with 1 or more amino acids incorporated), which drop off the ribosome during protein synthesis, or as a result of ribosome stalling. Functionally, catalyzes the release of premature peptidyl moieties from peptidyl-tRNA molecules trapped in stalled 50S ribosomal subunits, and thus maintains levels of free tRNAs and 50S ribosomes. The protein is Peptidyl-tRNA hydrolase of Methylobacterium radiotolerans (strain ATCC 27329 / DSM 1819 / JCM 2831 / NBRC 15690 / NCIMB 10815 / 0-1).